Here is a 216-residue protein sequence, read N- to C-terminus: Phosphoenolpyruvate guanylyltransferase (216 aa).

Residues T139, G155, and S158 each contribute to the phosphoenolpyruvate site.

It belongs to the CofC family.

The catalysed reaction is phosphoenolpyruvate + GTP + H(+) = enolpyruvoyl-2-diphospho-5'-guanosine + diphosphate. It functions in the pathway cofactor biosynthesis; coenzyme F420 biosynthesis. In terms of biological role, guanylyltransferase that catalyzes the activation of phosphoenolpyruvate (PEP) as enolpyruvoyl-2-diphospho-5'-guanosine, via the condensation of PEP with GTP. It is involved in the biosynthesis of coenzyme F420, a hydride carrier cofactor. This is Phosphoenolpyruvate guanylyltransferase from Streptomyces avermitilis (strain ATCC 31267 / DSM 46492 / JCM 5070 / NBRC 14893 / NCIMB 12804 / NRRL 8165 / MA-4680).